Reading from the N-terminus, the 124-residue chain is UPF0235 protein (124 aa).

The disordered stretch occupies residues 1–22 (MTKKGSSNSSKQQQQQQQIIIN).

This sequence belongs to the UPF0235 family.

The protein is UPF0235 protein of Dictyostelium discoideum (Social amoeba).